The primary structure comprises 52 residues: MFDINLTHEQQQKAVEQIQELMAKGISSGEAIQIVAKALREIHKNDKKTPDN.

It belongs to the UPF0181 family.

The sequence is that of UPF0181 protein NTHI1697 from Haemophilus influenzae (strain 86-028NP).